Here is an 895-residue protein sequence, read N- to C-terminus: MFRSILTKIFGSRNDRILRRLNKIVIKINQLEPEFEALSDDDLKAKTDAFKARLAQGETLEQLLPEAFATVREASKRVLGMRHFDVQLLGGMVLTNRCIAEMRTGEGKTLTATLPCYLNALTGKGVHVVTVNDYLARRDAETNRPLFEFLGMTVGVNVPGLSPEQKREAYAADVTYATNSELGFDYLRDNLAHTAQERFQRYLHYALVDEVDSILIDEARTPLIISGQAEDSSELYMTVDKLIPDLIKQDKEDSEEYQGEGDFTLDLKTKQAHLTERGQEKVEQWLTEQGLMSAEESLYSPSKISLLHHVYAALRAHTLFERDVDYIVKDGEIVIVDEHTGRTMAGRRWSDGLHQAIEAKEGVRIQSENQTVASITYQNYFRLYEKLAGMTGTADTEAFEFQQIYGLETIVVPTNRPMIRDDRTDVMFENEEYKFNAIIEDIKDCVARNQPVLVGTISIEKSELLSHALKKAGIKHNVLNAKFHAQEAEIVANAGYPGTVTIATNMAGRGTDIVLGGNWKAEIAKLDNPTEAQIEAIHTAWKARHEIVKAAGGLHIIGTERHESRRIDNQLRGRSGRQGDPGSSRFYLSLDDALMRIYLNEGKLNLMRKAFSTAGEAMESKMLTKVIASAQAKVEAHNFDGRKNLLEFDDVANDQRHAIYAQRNTLLDNEDISDTIDVIRADVFNQVIDQYIPPQSLEEMWDVPALEQRLKHDFALDLPLEKWLEEDNHFDEDALRQRVLDAAIEEYKQKESIVGEQTMRSFEKGVMLQTLDELWKEHLSAMDHLRRGIHLRGYAQKDPKQEYKKECFQMFTDMLDALKLSVVTTLSRVQVRTQEEVEQAERQRQEMAKRETASMQYNADEDSGEENTRRVGRNEPCPCGSGKKYKHCHGSKAKY.

ATP contacts are provided by residues Gln-87, 105 to 109 (GEGKT), and Asp-512. The span at 833–852 (TQEEVEQAERQRQEMAKRET) shows a compositional bias: basic and acidic residues. The disordered stretch occupies residues 833 to 895 (TQEEVEQAER…KHCHGSKAKY (63 aa)). 4 residues coordinate Zn(2+): Cys-877, Cys-879, Cys-888, and His-889. Residues 883-895 (KKYKHCHGSKAKY) show a composition bias toward basic residues.

Belongs to the SecA family. Monomer and homodimer. Part of the essential Sec protein translocation apparatus which comprises SecA, SecYEG and auxiliary proteins SecDF-YajC and YidC. Zn(2+) serves as cofactor.

It is found in the cell inner membrane. The protein localises to the cytoplasm. The enzyme catalyses ATP + H2O + cellular proteinSide 1 = ADP + phosphate + cellular proteinSide 2.. Functionally, part of the Sec protein translocase complex. Interacts with the SecYEG preprotein conducting channel. Has a central role in coupling the hydrolysis of ATP to the transfer of proteins into and across the cell membrane, serving both as a receptor for the preprotein-SecB complex and as an ATP-driven molecular motor driving the stepwise translocation of polypeptide chains across the membrane. This chain is Protein translocase subunit SecA, found in Pasteurella multocida (strain Pm70).